A 160-amino-acid polypeptide reads, in one-letter code: NADH-quinone oxidoreductase subunit I (160 aa).

4Fe-4S ferredoxin-type domains follow at residues 52–81 (RRYSNGEERCIACKLCEVICPAQAIVIEAE) and 91–120 (TRYDIDMTKCIYCGLCQEACPVDAIVEGPN). [4Fe-4S] cluster is bound by residues Cys61, Cys64, Cys67, Cys71, Cys100, Cys103, Cys106, and Cys110.

It belongs to the complex I 23 kDa subunit family. In terms of assembly, NDH-1 is composed of 14 different subunits. Subunits NuoA, H, J, K, L, M, N constitute the membrane sector of the complex. Requires [4Fe-4S] cluster as cofactor.

Its subcellular location is the cell membrane. The enzyme catalyses a quinone + NADH + 5 H(+)(in) = a quinol + NAD(+) + 4 H(+)(out). Functionally, NDH-1 shuttles electrons from NADH, via FMN and iron-sulfur (Fe-S) centers, to quinones in the respiratory chain. The immediate electron acceptor for the enzyme in this species is believed to be ubiquinone. Couples the redox reaction to proton translocation (for every two electrons transferred, four hydrogen ions are translocated across the cytoplasmic membrane), and thus conserves the redox energy in a proton gradient. This is NADH-quinone oxidoreductase subunit I from Wolbachia sp. subsp. Brugia malayi (strain TRS).